We begin with the raw amino-acid sequence, 157 residues long: S-ribosylhomocysteine lyase (157 aa).

Fe cation-binding residues include histidine 54, histidine 58, and cysteine 124.

The protein belongs to the LuxS family. Homodimer. It depends on Fe cation as a cofactor.

It carries out the reaction S-(5-deoxy-D-ribos-5-yl)-L-homocysteine = (S)-4,5-dihydroxypentane-2,3-dione + L-homocysteine. Involved in the synthesis of autoinducer 2 (AI-2) which is secreted by bacteria and is used to communicate both the cell density and the metabolic potential of the environment. The regulation of gene expression in response to changes in cell density is called quorum sensing. Catalyzes the transformation of S-ribosylhomocysteine (RHC) to homocysteine (HC) and 4,5-dihydroxy-2,3-pentadione (DPD). In Lacticaseibacillus paracasei (strain ATCC 334 / BCRC 17002 / CCUG 31169 / CIP 107868 / KCTC 3260 / NRRL B-441) (Lactobacillus paracasei), this protein is S-ribosylhomocysteine lyase.